A 377-amino-acid polypeptide reads, in one-letter code: Endoplasmic reticulum-Golgi intermediate compartment protein 2 (377 aa).

At Met1–Gly33 the chain is on the cytoplasmic side. A helical transmembrane segment spans residues Gly34 to Val54. Over Tyr55 to Cys319 the chain is Lumenal. The chain crosses the membrane as a helical span at residues Gly320 to Val340. Topologically, residues Glu341 to His377 are cytoplasmic.

This sequence belongs to the ERGIC family. As to quaternary structure, may form a heteromeric complex composed of ERGIC1, ERGIC2 and ERGIC3. Interacts with ERGIC3, the interaction is required for the stable expression of both proteins. May interact with EEF1A1.

The protein resides in the endoplasmic reticulum-Golgi intermediate compartment membrane. Its subcellular location is the golgi apparatus. It is found in the cis-Golgi network membrane. It localises to the endoplasmic reticulum membrane. The protein localises to the cytoplasm. The protein resides in the nucleus. Its function is as follows. Possible role in transport between endoplasmic reticulum and Golgi. The chain is Endoplasmic reticulum-Golgi intermediate compartment protein 2 (ERGIC2) from Macaca fascicularis (Crab-eating macaque).